We begin with the raw amino-acid sequence, 414 residues long: Serine-type anaerobic sulfatase-maturating enzyme (414 aa).

Residues 5–250 (TYAPFAKPLY…LCTIFDEWVK (246 aa)) enclose the Radical SAM core domain. [4Fe-4S] cluster is bound by residues C24 and C28. Y30 contributes to the S-adenosyl-L-methionine binding site. C31 is a [4Fe-4S] cluster binding site. S-adenosyl-L-methionine contacts are provided by G76, S131, and R143. C276, C282, and C297 together coordinate [4Fe-4S] cluster. The active-site Proton acceptor is the D298. Residues C339, C342, C348, C352, and C371 each contribute to the [4Fe-4S] cluster site.

This sequence belongs to the radical SAM superfamily. Anaerobic sulfatase-maturating enzyme family. [4Fe-4S] cluster serves as cofactor.

The enzyme catalyses L-seryl-[sulfatase] + S-adenosyl-L-methionine = 3-oxo-L-alanyl-[sulfatase] + 5'-deoxyadenosine + L-methionine + H(+). It participates in protein modification; sulfatase oxidation. Functionally, involved in 'Ser-type' sulfatase maturation under anaerobic conditions. Links the heparin and the chondroitin sulfate utilization pathways which contribute to the colonization of the intestinal tract. May catalyze the activation of chondro-6-sulfatase, i.e. the post-translational modification of a specific serine residue into 3-oxoalanine (also known as C(alpha)-formylglycine (FGly)), by a free radical chemical mechanism initiated via the reductive cleavage of S-adenosyl-L-methionine (SAM). Is also able to oxidize a cysteine residue in a synthetic substrate to FGly in vitro, but not in a recombinant Cys-type sulfatase in vivo. But since B.thetaiotaomicron possesses only Ser-type sulfatases, the oxidation of serine residues to FGly is the sole physiological activity. The chain is Serine-type anaerobic sulfatase-maturating enzyme (chuR) from Bacteroides thetaiotaomicron (strain ATCC 29148 / DSM 2079 / JCM 5827 / CCUG 10774 / NCTC 10582 / VPI-5482 / E50).